The chain runs to 264 residues: Phosphonoacetaldehyde hydrolase (264 aa).

D9 (nucleophile) is an active-site residue. 2 residues coordinate Mg(2+): D9 and A11. K50 (schiff-base intermediate with substrate) is an active-site residue. A Mg(2+)-binding site is contributed by D183.

This sequence belongs to the HAD-like hydrolase superfamily. PhnX family. As to quaternary structure, homodimer. Mg(2+) serves as cofactor.

The enzyme catalyses phosphonoacetaldehyde + H2O = acetaldehyde + phosphate + H(+). Functionally, involved in phosphonate degradation. This is Phosphonoacetaldehyde hydrolase from Bacillus thuringiensis (strain Al Hakam).